The primary structure comprises 368 residues: Glutamate 5-kinase (368 aa).

Residue Lys-10 participates in ATP binding. Substrate contacts are provided by Ser-50, Asp-137, and Asn-149. 169-170 (TD) provides a ligand contact to ATP. Positions 276–354 (RGTLVLDDGA…ESIVRELGYM (79 aa)) constitute a PUA domain.

It belongs to the glutamate 5-kinase family.

Its subcellular location is the cytoplasm. The catalysed reaction is L-glutamate + ATP = L-glutamyl 5-phosphate + ADP. Its pathway is amino-acid biosynthesis; L-proline biosynthesis; L-glutamate 5-semialdehyde from L-glutamate: step 1/2. Catalyzes the transfer of a phosphate group to glutamate to form L-glutamate 5-phosphate. The chain is Glutamate 5-kinase from Pseudomonas savastanoi pv. phaseolicola (strain 1448A / Race 6) (Pseudomonas syringae pv. phaseolicola (strain 1448A / Race 6)).